The sequence spans 154 residues: Transcription antitermination protein NusB (154 aa).

It belongs to the NusB family.

In terms of biological role, involved in transcription antitermination. Required for transcription of ribosomal RNA (rRNA) genes. Binds specifically to the boxA antiterminator sequence of the ribosomal RNA (rrn) operons. The sequence is that of Transcription antitermination protein NusB from Oleidesulfovibrio alaskensis (strain ATCC BAA-1058 / DSM 17464 / G20) (Desulfovibrio alaskensis).